The sequence spans 1368 residues: DNA-directed RNA polymerase subunit beta (1368 aa).

Belongs to the RNA polymerase beta chain family. In terms of assembly, the RNAP catalytic core consists of 2 alpha, 1 beta, 1 beta' and 1 omega subunit. When a sigma factor is associated with the core the holoenzyme is formed, which can initiate transcription.

The enzyme catalyses RNA(n) + a ribonucleoside 5'-triphosphate = RNA(n+1) + diphosphate. Its function is as follows. DNA-dependent RNA polymerase catalyzes the transcription of DNA into RNA using the four ribonucleoside triphosphates as substrates. The sequence is that of DNA-directed RNA polymerase subunit beta from Ralstonia nicotianae (strain ATCC BAA-1114 / GMI1000) (Ralstonia solanacearum).